The chain runs to 309 residues: 5-oxoprolinase subunit C (309 aa).

The protein belongs to the PxpC family. Forms a complex composed of PxpA, PxpB and PxpC.

The catalysed reaction is 5-oxo-L-proline + ATP + 2 H2O = L-glutamate + ADP + phosphate + H(+). In terms of biological role, catalyzes the cleavage of 5-oxoproline to form L-glutamate coupled to the hydrolysis of ATP to ADP and inorganic phosphate. This Haemophilus influenzae (strain ATCC 51907 / DSM 11121 / KW20 / Rd) protein is 5-oxoprolinase subunit C.